The chain runs to 296 residues: Probable DNA-directed RNA polymerase III subunit RPC6 (296 aa).

It belongs to the eukaryotic RPC34/RPC39 RNA polymerase subunit family.

It is found in the nucleus. Functionally, DNA-dependent RNA polymerase catalyzes the transcription of DNA into RNA using the four ribonucleoside triphosphates as substrates. Specific peripheric component of RNA polymerase III which synthesizes small RNAs, such as 5S rRNA and tRNAs. This is Probable DNA-directed RNA polymerase III subunit RPC6 from Caenorhabditis elegans.